Consider the following 313-residue polypeptide: Ribosomal RNA small subunit methyltransferase H (313 aa).

Residues Gly36–His38, Asp56, Phe80, Asp102, and Gln109 each bind S-adenosyl-L-methionine.

It belongs to the methyltransferase superfamily. RsmH family.

Its subcellular location is the cytoplasm. It catalyses the reaction cytidine(1402) in 16S rRNA + S-adenosyl-L-methionine = N(4)-methylcytidine(1402) in 16S rRNA + S-adenosyl-L-homocysteine + H(+). Specifically methylates the N4 position of cytidine in position 1402 (C1402) of 16S rRNA. The sequence is that of Ribosomal RNA small subunit methyltransferase H from Actinobacillus pleuropneumoniae serotype 7 (strain AP76).